Reading from the N-terminus, the 154-residue chain is Myoglobin (154 aa).

The Globin domain occupies 2–148 (GLSDGEWQLV…FRKDMASNYK (147 aa)). The residue at position 4 (Ser4) is a Phosphoserine. His65 is a nitrite binding site. O2 is bound at residue His65. Thr68 carries the post-translational modification Phosphothreonine. Position 94 (His94) interacts with heme b.

This sequence belongs to the globin family. Monomeric.

It localises to the cytoplasm. Its subcellular location is the sarcoplasm. The enzyme catalyses Fe(III)-heme b-[protein] + nitric oxide + H2O = Fe(II)-heme b-[protein] + nitrite + 2 H(+). The catalysed reaction is H2O2 + AH2 = A + 2 H2O. Functionally, monomeric heme protein which primary function is to store oxygen and facilitate its diffusion within muscle tissues. Reversibly binds oxygen through a pentacoordinated heme iron and enables its timely and efficient release as needed during periods of heightened demand. Depending on the oxidative conditions of tissues and cells, and in addition to its ability to bind oxygen, it also has a nitrite reductase activity whereby it regulates the production of bioactive nitric oxide. Under stress conditions, like hypoxia and anoxia, it also protects cells against reactive oxygen species thanks to its pseudoperoxidase activity. The chain is Myoglobin (MB) from Pongo pygmaeus (Bornean orangutan).